The primary structure comprises 344 residues: tRNA(Ile)-lysidine synthase (344 aa).

30 to 35 (SGGQDS) contributes to the ATP binding site. The interval 323–344 (PPPPAPVPPDPGERSPPPSPLY) is disordered.

The protein belongs to the tRNA(Ile)-lysidine synthase family.

The protein resides in the cytoplasm. The enzyme catalyses cytidine(34) in tRNA(Ile2) + L-lysine + ATP = lysidine(34) in tRNA(Ile2) + AMP + diphosphate + H(+). Its function is as follows. Ligates lysine onto the cytidine present at position 34 of the AUA codon-specific tRNA(Ile) that contains the anticodon CAU, in an ATP-dependent manner. Cytidine is converted to lysidine, thus changing the amino acid specificity of the tRNA from methionine to isoleucine. In Thermosynechococcus vestitus (strain NIES-2133 / IAM M-273 / BP-1), this protein is tRNA(Ile)-lysidine synthase.